A 346-amino-acid chain; its full sequence is MSIVSISYNQEEYIREALDGFAAQRTEFPVEVIIADDASTDATPRIIGEYAARYPQLFRPILRQTNIGVHANFKDVLSAARGEYLALCEGDDYWTDPLKLSKQVKYLDRHPETTVCFHPVRVIYEDGAKDSEFPPLSWRRDLSVDALLARNFIQTNSVVYRRQPSYDDIPANVMPIDWYLHVRHAVGGEIAMLPETMAVYRRHAHGIWHSAYTDRRKFWETRGHGMAATLEAMLDLVHGHREREAIVGEVSAWVLREIGKTPGRQGRALLLKSIADHPRMTMLSLQHRWAQTPWRRFKRRLSTELSSLAALAYATRRRALEGRDGGYRETTSPPTGRGRNVRGSHA.

Positions 322 to 346 (GRDGGYRETTSPPTGRGRNVRGSHA) are disordered.

This is an uncharacterized protein from Mycobacterium tuberculosis (strain CDC 1551 / Oshkosh).